A 101-amino-acid chain; its full sequence is Interleukin-8 (101 aa).

The first 22 residues, 1–22 (MTSKLAIALLAAFLLSAALCKA), serve as a signal peptide directing secretion. Arginine 27 bears the Citrulline mark. 2 disulfides stabilise this stretch: cysteine 34-cysteine 61 and cysteine 36-cysteine 77.

The protein belongs to the intercrine alpha (chemokine CxC) family. As to quaternary structure, homodimer. Post-translationally, citrullination at Arg-27 prevents proteolysis, and dampens tissue inflammation, it also enhances leukocytosis, possibly through impaired chemokine clearance from the blood circulation.

The protein resides in the secreted. Chemotactic factor that mediates inflammatory response by attracting neutrophils, basophils, and T-cells to clear pathogens and protect the host from infection. Also plays an important role in neutrophil activation. Released in response to an inflammatory stimulus, exerts its effect by binding to the G-protein-coupled receptors CXCR1 and CXCR2, primarily found in neutrophils, monocytes and endothelial cells. G-protein heterotrimer (alpha, beta, gamma subunits) constitutively binds to CXCR1/CXCR2 receptor and activation by IL8 leads to beta and gamma subunits release from Galpha (GNAI2 in neutrophils) and activation of several downstream signaling pathways including PI3K and MAPK pathways. The sequence is that of Interleukin-8 (CXCL8) from Tursiops truncatus (Atlantic bottle-nosed dolphin).